Here is a 331-residue protein sequence, read N- to C-terminus: Cytosolic 5'-nucleotidase 3A (331 aa).

Aspartate 83 functions as the Nucleophile in the catalytic mechanism. Mg(2+) contacts are provided by aspartate 83 and aspartate 85. Aspartate 85 (proton donor) is an active-site residue. Residue glutamate 130 coordinates CMP. The N(7)-methyl-GMP site is built by glutamate 130 and serine 151. Substrate-binding positions include 198–200 and lysine 247; that span reads SAG. Position 272 (aspartate 272) interacts with Mg(2+). The residue at position 273 (serine 273) is a Phosphoserine.

This sequence belongs to the pyrimidine 5'-nucleotidase family. As to quaternary structure, monomer. In terms of tissue distribution, isoform 2 is highly expressed in the brain, heart, spleen, kidney and blood. Isoform 2 is expressed (at protein level) in the spleen, skeletal muscle and gastrointestinal epithelia.

Its subcellular location is the cytoplasm. The catalysed reaction is N(7)-methyl-GMP + H2O = N(7)-methylguanosine + phosphate. It catalyses the reaction a ribonucleoside 5'-phosphate + H2O = a ribonucleoside + phosphate. Its function is as follows. Nucleotidase which shows specific activity towards cytidine monophosphate (CMP) and 7-methylguanosine monophosphate (m(7)GMP). CMP seems to be the preferred substrate. The polypeptide is Cytosolic 5'-nucleotidase 3A (Nt5c3a) (Mus musculus (Mouse)).